We begin with the raw amino-acid sequence, 124 residues long: Large ribosomal subunit protein uL18 (124 aa).

Belongs to the universal ribosomal protein uL18 family. Part of the 50S ribosomal subunit; part of the 5S rRNA/L5/L18/L25 subcomplex. Contacts the 5S and 23S rRNAs.

This is one of the proteins that bind and probably mediate the attachment of the 5S RNA into the large ribosomal subunit, where it forms part of the central protuberance. This Aquifex pyrophilus protein is Large ribosomal subunit protein uL18.